The sequence spans 1162 residues: Paired amphipathic helix protein Sin3-like 5 (1162 aa).

The disordered stretch occupies residues M1 to T37. The segment covering T18–S30 has biased composition (polar residues). 2 consecutive PAH domains span residues R28–G109 and K123–F193. Disordered regions lie at residues R702–E727, Q743–N779, G803–G830, and K1121–R1143. S817 is modified (phosphoserine). Positions A1123 to S1139 are enriched in polar residues.

The protein resides in the nucleus. Acts as a transcriptional repressor. Plays roles in regulating gene expression and genome stability. This chain is Paired amphipathic helix protein Sin3-like 5 (SNL5), found in Arabidopsis thaliana (Mouse-ear cress).